A 106-amino-acid polypeptide reads, in one-letter code: uncharacterized protein (106 aa).

Residues 1–25 (MSVIKKNIPAIGLCICAFFIHSAVG) form the signal peptide.

The protein to the N-terminal of the FimA/PapA family of fimbria proteins.

This is an uncharacterized protein from Salmonella typhi.